A 738-amino-acid polypeptide reads, in one-letter code: DNA repair and recombination protein RAD54-like (738 aa).

Residues methionine 1–proline 31 are disordered. Acidic residues predominate over residues aspartate 18 to methionine 29. In terms of domain architecture, Helicase ATP-binding spans glycine 164–glycine 339. Aspartate 177–threonine 184 provides a ligand contact to ATP. Positions aspartate 290–histidine 293 match the DEAH box motif. In terms of domain architecture, Helicase C-terminal spans leucine 493–glutamate 647. Serine 566 and serine 567 each carry phosphoserine.

As to quaternary structure, homohexamer. Interacts with RAD51. Phosphorylated. Phosphorylations at Ser-566 and Ser-567 allow efficient removal of RAD51 filaments from DNA.

It carries out the reaction ATP + H2O = ADP + phosphate + H(+). Plays an essential role in homologous recombination (HR) which is a major pathway for repairing DNA double-strand breaks (DSBs), single-stranded DNA (ssDNA) gaps, and stalled or collapsed replication forks. Acts as a molecular motor during the homology search and guides RAD51 ssDNA along a donor dsDNA thereby changing the homology search from the diffusion-based mechanism to a motor-guided mechanism. Also plays an essential role in RAD51-mediated synaptic complex formation which consists of three strands encased in a protein filament formed once homology is recognized. Once DNA strand exchange occured, dissociates RAD51 from nucleoprotein filaments formed on dsDNA. This chain is DNA repair and recombination protein RAD54-like (rad54l), found in Danio rerio (Zebrafish).